Reading from the N-terminus, the 329-residue chain is Malate dehydrogenase (329 aa).

Residue 12–18 participates in NAD(+) binding; it reads GAAGQIG. 2 residues coordinate substrate: R95 and R101. NAD(+)-binding positions include N108, Q115, and 132 to 134; that span reads VGN. Substrate is bound by residues N134 and R165. The Proton acceptor role is filled by H190.

This sequence belongs to the LDH/MDH superfamily. MDH type 2 family.

It carries out the reaction (S)-malate + NAD(+) = oxaloacetate + NADH + H(+). Its function is as follows. Catalyzes the reversible oxidation of malate to oxaloacetate. The polypeptide is Malate dehydrogenase (Janthinobacterium sp. (strain Marseille) (Minibacterium massiliensis)).